The sequence spans 428 residues: Ectoine/5-hydroxyectoine TRAP transporter large permease protein UehC (428 aa).

A run of 12 helical transmembrane segments spans residues 9 to 29, 49 to 69, 99 to 119, 139 to 159, 172 to 192, 217 to 237, 242 to 262, 273 to 293, 302 to 322, 324 to 344, 366 to 386, and 400 to 420; these read MIVL…GAFI, LAGI…AADI, AAAC…VVAI, ALIV…GMII, FIAG…YAYI, ALWP…GVFS, AAAC…SMSL, GLIT…SWVI, ILGA…VISI, FFIG…VPVF, VAIG…IAVF, and FILM…IALF.

It belongs to the TRAP transporter large permease family. In terms of assembly, the complex comprises the extracytoplasmic solute receptor protein UehA, and the two transmembrane proteins UehB and UehC.

The protein localises to the cell inner membrane. Functionally, part of the tripartite ATP-independent periplasmic (TRAP) transport system UehABC, which imports both ectoine and 5-hydroxyectoine as nutrients, and not as osmoprotectants. This chain is Ectoine/5-hydroxyectoine TRAP transporter large permease protein UehC, found in Ruegeria pomeroyi (strain ATCC 700808 / DSM 15171 / DSS-3) (Silicibacter pomeroyi).